A 781-amino-acid polypeptide reads, in one-letter code: Coiled-coil and C2 domain-containing protein 1-like (781 aa).

5 disordered regions span residues 32–63 (MGRV…NVPG), 94–134 (ELNG…APNS), 187–296 (ESEI…AKES), 313–373 (CSAD…TEGN), and 403–447 (GELP…VEGK). Low complexity predominate over residues 37–59 (RPAAPARGAPPAARGRPAPAAPA). Gly residues predominate over residues 98–107 (LVGGGGGGGA). The segment covering 108–118 (APTVPTRAAPR) has biased composition (low complexity). 2 stretches are compositionally biased toward pro residues: residues 119 to 129 (APGPSGPPPSA) and 204 to 222 (PLPP…PAPP). Residues 244–256 (APAPTAAAPPATK) show a composition bias toward low complexity. The span at 269–280 (ILHHRRDLHKQN) shows a compositional bias: basic residues. Residues 285–296 (IADKDKESAKES) show a composition bias toward basic and acidic residues. Positions 324 to 341 (PPSPPPYRKPAPPQPQAP) are enriched in pro residues. The span at 363–373 (KMAEKAKTEGN) shows a compositional bias: basic and acidic residues. One can recognise a C2 domain in the interval 605–741 (YEMRQIPSAD…EHSAEMEESL (137 aa)).

It belongs to the CC2D1 family.

The protein is Coiled-coil and C2 domain-containing protein 1-like of Caenorhabditis elegans.